The primary structure comprises 364 residues: tRNA-specific 2-thiouridylase MnmA 1 (364 aa).

ATP-binding positions include 11–18 and phenylalanine 37; that span reads GMSGGTDS. Cysteine 96 acts as the Nucleophile in catalysis. A disulfide bridge links cysteine 96 with cysteine 193. Glycine 120 is a binding site for ATP. Residues 142–144 are interaction with tRNA; the sequence is KDQ. The active-site Cysteine persulfide intermediate is the cysteine 193. Residues 309–310 are interaction with tRNA; the sequence is RY.

Belongs to the MnmA/TRMU family.

The protein localises to the cytoplasm. It carries out the reaction S-sulfanyl-L-cysteinyl-[protein] + uridine(34) in tRNA + AH2 + ATP = 2-thiouridine(34) in tRNA + L-cysteinyl-[protein] + A + AMP + diphosphate + H(+). Its function is as follows. Catalyzes the 2-thiolation of uridine at the wobble position (U34) of tRNA, leading to the formation of s(2)U34. This chain is tRNA-specific 2-thiouridylase MnmA 1, found in Bacteroides fragilis (strain YCH46).